Reading from the N-terminus, the 472-residue chain is Tryptophanase (472 aa).

Lysine 270 carries the post-translational modification N6-(pyridoxal phosphate)lysine.

It belongs to the beta-eliminating lyase family. Homotetramer. Requires pyridoxal 5'-phosphate as cofactor.

The enzyme catalyses L-tryptophan + H2O = indole + pyruvate + NH4(+). It participates in amino-acid degradation; L-tryptophan degradation via pyruvate pathway; indole and pyruvate from L-tryptophan: step 1/1. The polypeptide is Tryptophanase (Haemophilus influenzae (strain 86-028NP)).